Here is a 476-residue protein sequence, read N- to C-terminus: Ankyrin repeat, SAM and basic leucine zipper domain-containing protein 1 (476 aa).

Residues Ser18 and Ser21 each carry the phosphoserine modification. 6 ANK repeats span residues 46–75, 79–108, 111–145, 149–178, 182–211, and 215–244; these read EKNE…SIDS, YGWT…NASF, DKQT…DPNV, RLMT…EVNT, NGYT…DKML, and DGKT…PLEG. Residues 273–335 enclose the SAM domain; that stretch reads SYAAFEDLEI…KILAALKELE (63 aa).

In terms of assembly, interacts with DDX4, PIWIL1, RANBP9 and TDRD1.

It is found in the cytoplasm. Plays a central role during spermatogenesis by repressing transposable elements and preventing their mobilization, which is essential for the germline integrity. Acts via the piRNA metabolic process, which mediates the repression of transposable elements during meiosis by forming complexes composed of piRNAs and Piwi proteins and governs the methylation and subsequent repression of transposons. Its association with pi-bodies suggests a participation in the primary piRNAs metabolic process. Required prior to the pachytene stage to facilitate the production of multiple types of piRNAs, including those associated with repeats involved in the regulation of retrotransposons. May act by mediating protein-protein interactions during germ cell maturation. The polypeptide is Ankyrin repeat, SAM and basic leucine zipper domain-containing protein 1 (ASZ1) (Dasypus novemcinctus (Nine-banded armadillo)).